The primary structure comprises 1059 residues: RNA-binding protein 26 (1059 aa).

Basic and acidic residues-rich tracts occupy residues 98–114 and 130–147; these read EKEIKKDEVNKEEEKEK and RHKDTRENRKRSNSDRES. The disordered stretch occupies residues 98–275; it reads EKEIKKDEVN…PVDNSYASGS (178 aa). Residues 172–182 show a composition bias toward polar residues; that stretch reads LNSNKVQNAKN. Basic and acidic residues predominate over residues 184 to 213; that stretch reads RSRDDRKRDDRFRKREYDRNVPRRDSYRDR. Residues 214 to 231 show a composition bias toward basic residues; sequence YNRRRGRSRSYSRSRSRS. Residues 232–266 are compositionally biased toward basic and acidic residues; sequence WSKERQRDRDRSRSRTRSRDKDSGKPKFDLDRPDP. The segment at 327-355 adopts a C3H1-type zinc-finger fold; that stretch reads QMQKKRCRDYDEKGFCMRGDMCPFDHGSD. The segment covering 375–428 has biased composition (pro residues); that stretch reads PVLEGPPPPGLPPPPSLLTPPPVNLQPPPVPPPGPLPPSLPPVTGPPPPLPPLQ. The segment at 375-443 is disordered; that stretch reads PVLEGPPPPG…APPNSATSSV (69 aa). Residues 434–443 are compositionally biased toward low complexity; sequence APPNSATSSV. Residues 581–655 form the RRM 1 domain; it reads TKLELRRIPP…RFIRMYWHRE (75 aa). Residues 771-873 adopt a coiled-coil conformation; the sequence is GDAQKKKQEA…LLDTELDLYN (103 aa). Residues 942 to 1011 enclose the RRM 2 domain; it reads RALKISGFTE…QDLKLAWNKP (70 aa). The disordered stretch occupies residues 1010 to 1059; sequence KPVPNASSTEVEDADQEEEEFHEDSIVDDSLLQDDDEEEEDDNESRSWRR. Acidic residues-rich tracts occupy residues 1019-1031 and 1040-1052; these read EVEDADQEEEEFH and LLQDDDEEEEDDN.

May be involved in the turnover of nuclear polyadenylated (pA+) RNA. The polypeptide is RNA-binding protein 26 (Xenopus laevis (African clawed frog)).